The primary structure comprises 648 residues: Sodium/nucleoside cotransporter 1 (648 aa).

Residues 1–80 (MADNTQRQRE…ARSFCREHRQ (80 aa)) lie on the Cytoplasmic side of the membrane. Residues 81 to 104 (LFGWICKGLLSTACLGFLMVACLL) form a helical membrane-spanning segment. The Extracellular segment spans residues 105 to 109 (DLQRA). Residues 110-128 (LALLIITCVVLVFLAYDLL) traverse the membrane as a helical segment. Residues 129–147 (KRLLGSKLRRCVKFQGHSC) lie on the Cytoplasmic side of the membrane. A helical membrane pass occupies residues 148–167 (LSLWLKRGLALAAGVGLILW). The Extracellular portion of the chain corresponds to 168–178 (LSLDTAQRPEQ). Residues 179 to 195 (LVSFAGICVFLVLLFAG) form a helical membrane-spanning segment. The Cytoplasmic segment spans residues 196-201 (SKHHRA). A helical transmembrane segment spans residues 202-222 (VSWRAVSWGLGLQFVLGLFVI). Topologically, residues 223–261 (RTEPGFIAFQWLGDQIQVFLSYTEAGSSFVFGEALVKDV) are extracellular. Residues 262-283 (FAFQVLPIIIFFSCVMSVLYYL) form a helical membrane-spanning segment. Residues 284–294 (GLMQWVILKIA) are Cytoplasmic-facing. The helical transmembrane segment at 295–318 (WLMQVTMGTSATETLSVAGNIFVS) threads the bilayer. Residues 319 to 337 (QTEAPLLIRPYLADMTLSE) lie on the Extracellular side of the membrane. Residues 338–360 (VHVVMTGGYATIAGSLLGAYISF) traverse the membrane as a helical segment. Topologically, residues 361 to 366 (GIDAAS) are cytoplasmic. Residues 367–386 (LIAASVMAAPCALALSKLVY) traverse the membrane as a helical segment. Residues 387–423 (PEVEESKFRSENGVKLTYGDAQNLLEAASAGAAISVK) are Extracellular-facing. A helical membrane pass occupies residues 424–446 (VVANIAANLIAFLAVLAFVNAAL). Residues 447 to 457 (SWLGDMVDIQG) lie on the Cytoplasmic side of the membrane. Residues 458-479 (LSFQLICSYVLRPVAFLMGVAW) form a helical membrane-spanning segment. The Extracellular segment spans residues 480–534 (EDCPVVAELLGIKFFLNEFVAYQELSQYKQRRLAGAEEWLGDKKQWISVRAEILT). A helical transmembrane segment spans residues 535–558 (TYALCGFANFSSIGIMLGGLTSLV). The Cytoplasmic portion of the chain corresponds to 559-569 (PQRRSDFSQIV). The chain crosses the membrane as a helical span at residues 570–592 (LRALITGAFVSLLNACVAGILYV). The Extracellular portion of the chain corresponds to 593–648 (PRGVEVDCVSLLNQTVSSSSFEVYLCCRQVFQSTSSEFSQVALDNCCRFYNHTVCT). 2 N-linked (GlcNAc...) asparagine glycosylation sites follow: asparagine 605 and asparagine 643.

The protein belongs to the concentrative nucleoside transporter (CNT) (TC 2.A.41) family. N-glycosylated. N-glycosylation is required for localization to the plasma membrane and the transporter activity. Expressed predominantly in the brush-border membranes of the polarized epithelial cells of jejunum and renal cortical tubules and in the bile canalicular membranes of liver parenchymal cells.

The protein localises to the cell membrane. It is found in the apical cell membrane. The catalysed reaction is uridine(out) + Na(+)(out) = uridine(in) + Na(+)(in). The enzyme catalyses thymidine(out) + Na(+)(out) = thymidine(in) + Na(+)(in). It catalyses the reaction cytidine(out) + Na(+)(out) = cytidine(in) + Na(+)(in). It carries out the reaction adenosine(out) + Na(+)(out) = adenosine(in) + Na(+)(in). With respect to regulation, due to its high apparent affinity but slow transport, adenosine could act as a negative regulator of pyrimidine transport under some conditions. In terms of biological role, sodium and pyrimidine nucleoside symporter of the plasma membrane that imports uridine, thymidine and cytidine into cells by coupling their transport to the transmembrane sodium electrochemical gradient. Also transports adenosine, an atypical substrate transported with high apparent affinity, but low maximum velocity. Therefore, exhibits the transport characteristics of the nucleoside transport system cit or N2 subtype (N2/cit). Involved in renal nucleoside (re)absorption. The protein is Sodium/nucleoside cotransporter 1 of Rattus norvegicus (Rat).